The sequence spans 144 residues: Large ribosomal subunit protein uL13 (144 aa).

Belongs to the universal ribosomal protein uL13 family. Part of the 50S ribosomal subunit.

In terms of biological role, this protein is one of the early assembly proteins of the 50S ribosomal subunit, although it is not seen to bind rRNA by itself. It is important during the early stages of 50S assembly. This Nitratidesulfovibrio vulgaris (strain DSM 19637 / Miyazaki F) (Desulfovibrio vulgaris) protein is Large ribosomal subunit protein uL13.